A 161-amino-acid chain; its full sequence is Putative pre-16S rRNA nuclease (161 aa).

Belongs to the YqgF nuclease family.

It localises to the cytoplasm. Functionally, could be a nuclease involved in processing of the 5'-end of pre-16S rRNA. The protein is Putative pre-16S rRNA nuclease of Rhodospirillum rubrum (strain ATCC 11170 / ATH 1.1.1 / DSM 467 / LMG 4362 / NCIMB 8255 / S1).